The sequence spans 256 residues: Phosphatidylglycerol--prolipoprotein diacylglyceryl transferase 2 (256 aa).

3 helical membrane passes run 11–31 (LKIY…TLLF), 46–66 (FNAT…LYII), and 83–103 (FGNG…IALC). Arg-130 lines the a 1,2-diacyl-sn-glycero-3-phospho-(1'-sn-glycerol) pocket. The next 3 helical transmembrane spans lie at 142 to 162 (AETT…PAGV), 164 to 184 (LYPT…FLLW), and 221 to 241 (VGLL…GILL).

Belongs to the Lgt family.

It is found in the cell membrane. The catalysed reaction is L-cysteinyl-[prolipoprotein] + a 1,2-diacyl-sn-glycero-3-phospho-(1'-sn-glycerol) = an S-1,2-diacyl-sn-glyceryl-L-cysteinyl-[prolipoprotein] + sn-glycerol 1-phosphate + H(+). Its pathway is protein modification; lipoprotein biosynthesis (diacylglyceryl transfer). Its function is as follows. Catalyzes the transfer of the diacylglyceryl group from phosphatidylglycerol to the sulfhydryl group of the N-terminal cysteine of a prolipoprotein, the first step in the formation of mature lipoproteins. The polypeptide is Phosphatidylglycerol--prolipoprotein diacylglyceryl transferase 2 (Clostridium perfringens (strain 13 / Type A)).